We begin with the raw amino-acid sequence, 202 residues long: MADS-box transcription factor 33 (202 aa).

The MADS-box domain maps to 1 to 61; that stretch reads MVRGKVQMRR…GKLHELATNG (61 aa). One can recognise a K-box domain in the interval 87–177; that stretch reads QQVAEQGIFL…QEKVKEQQKL (91 aa).

In terms of tissue distribution, expressed in seedling roots.

It localises to the nucleus. In terms of biological role, probable transcription factor. This chain is MADS-box transcription factor 33 (MADS33), found in Oryza sativa subsp. japonica (Rice).